A 156-amino-acid chain; its full sequence is Ribosomal RNA large subunit methyltransferase H (156 aa).

S-adenosyl-L-methionine-binding positions include Leu-73, Gly-104, and 123–128 (LSAMTL).

The protein belongs to the RNA methyltransferase RlmH family. As to quaternary structure, homodimer.

It is found in the cytoplasm. The enzyme catalyses pseudouridine(1915) in 23S rRNA + S-adenosyl-L-methionine = N(3)-methylpseudouridine(1915) in 23S rRNA + S-adenosyl-L-homocysteine + H(+). Specifically methylates the pseudouridine at position 1915 (m3Psi1915) in 23S rRNA. This chain is Ribosomal RNA large subunit methyltransferase H, found in Laribacter hongkongensis (strain HLHK9).